The chain runs to 259 residues: E3 ubiquitin-protein ligase RNF170 (259 aa).

At 1 to 25 (MAKYQGEVQSLKLDDDSVIEGVSDQ) the chain is on the lumenal side. Residues 26-46 (VLVAVVVSLALIATLVYALFS) form a helical membrane-spanning segment. The Cytoplasmic segment spans residues 47–202 (RNAHQNIHPE…GGLFWMFRIR (156 aa)). The RING-type zinc finger occupies 88-131 (CPICLHQASLPVETNCGHLFCGTCIVAYWRYGSWLGAISCPICR). The helical transmembrane segment at 203 to 223 (IILCLMGAFFYLISPLDFVPE) threads the bilayer. Position 224 (alanine 224) is a topological domain, lumenal. The chain crosses the membrane as a helical span at residues 225–245 (LFGILGFLDDFFVIFLLLIYI). Residues 246–259 (SIMYREVITQRLNR) are Cytoplasmic-facing.

In terms of assembly, constitutively associated with the ERLIN1/ERLIN 2 complex. Interacts with activated ITPR1.

The protein localises to the endoplasmic reticulum membrane. It catalyses the reaction S-ubiquitinyl-[E2 ubiquitin-conjugating enzyme]-L-cysteine + [acceptor protein]-L-lysine = [E2 ubiquitin-conjugating enzyme]-L-cysteine + N(6)-ubiquitinyl-[acceptor protein]-L-lysine.. It participates in protein modification; protein ubiquitination. E3 ubiquitin-protein ligase. Plays an essential role in stimulus-induced inositol 1,4,5-trisphosphate receptor type 1 (ITPR1) ubiquitination and degradation via the endoplasmic reticulum-associated degradation (ERAD) pathway. Also involved in ITPR1 turnover in resting cells. Selectively inhibits the TLR3-triggered innate immune response by promoting the 'Lys-48'-linked polyubiquitination and degradation of TLR3. In Bos taurus (Bovine), this protein is E3 ubiquitin-protein ligase RNF170 (RNF170).